We begin with the raw amino-acid sequence, 131 residues long: Protein anoxia up-regulated (131 aa).

The segment covering Met1–Val24 has biased composition (polar residues). A disordered region spans residues Met1–Gly121. Low complexity-rich tracts occupy residues Ser44–Ser53 and Thr98–Gly116.

As to expression, concentrated in lamina neurons, first optic lobe neurons and cortical neurons of central brain.

Functionally, plays an important role in the regulation of tissue responsiveness to oxygen deprivation. This Drosophila melanogaster (Fruit fly) protein is Protein anoxia up-regulated.